Reading from the N-terminus, the 308-residue chain is Aspartate carbamoyltransferase catalytic subunit (308 aa).

Residues R49 and T50 each coordinate carbamoyl phosphate. K77 contacts L-aspartate. Residues R99, H127, and Q130 each contribute to the carbamoyl phosphate site. R160 and R211 together coordinate L-aspartate. Carbamoyl phosphate contacts are provided by A252 and P253.

Belongs to the aspartate/ornithine carbamoyltransferase superfamily. ATCase family. Heterododecamer (2C3:3R2) of six catalytic PyrB chains organized as two trimers (C3), and six regulatory PyrI chains organized as three dimers (R2).

It carries out the reaction carbamoyl phosphate + L-aspartate = N-carbamoyl-L-aspartate + phosphate + H(+). It functions in the pathway pyrimidine metabolism; UMP biosynthesis via de novo pathway; (S)-dihydroorotate from bicarbonate: step 2/3. Its function is as follows. Catalyzes the condensation of carbamoyl phosphate and aspartate to form carbamoyl aspartate and inorganic phosphate, the committed step in the de novo pyrimidine nucleotide biosynthesis pathway. In Geobacillus kaustophilus (strain HTA426), this protein is Aspartate carbamoyltransferase catalytic subunit.